We begin with the raw amino-acid sequence, 658 residues long: Threonine--tRNA ligase (658 aa).

A TGS domain is found at 1 to 61; the sequence is MSDVRVIIQR…KDGETVEAVE (61 aa). The catalytic stretch occupies residues 259–554; the sequence is DHRKLGSELD…LLEHYAGAMP (296 aa). 3 residues coordinate Zn(2+): C353, H404, and H531.

This sequence belongs to the class-II aminoacyl-tRNA synthetase family. Homodimer. The cofactor is Zn(2+).

It is found in the cytoplasm. It catalyses the reaction tRNA(Thr) + L-threonine + ATP = L-threonyl-tRNA(Thr) + AMP + diphosphate + H(+). Its function is as follows. Catalyzes the attachment of threonine to tRNA(Thr) in a two-step reaction: L-threonine is first activated by ATP to form Thr-AMP and then transferred to the acceptor end of tRNA(Thr). Also edits incorrectly charged L-seryl-tRNA(Thr). The chain is Threonine--tRNA ligase from Streptomyces coelicolor (strain ATCC BAA-471 / A3(2) / M145).